Here is a 33-residue protein sequence, read N- to C-terminus: Cysteine-rich venom protein tripurin (33 aa).

This sequence belongs to the CRISP family. Post-translationally, contains 8 disulfide bonds. In terms of tissue distribution, expressed by the venom gland.

It localises to the secreted. Blocks contraction of smooth muscle elicited by high potassium-induced depolarization, but does not block caffeine-stimulated contraction. May target voltage-gated calcium channels on smooth muscle. The sequence is that of Cysteine-rich venom protein tripurin from Trimeresurus purpureomaculatus (Mangrove pit viper).